The sequence spans 1212 residues: Peregrin (1212 aa).

The C2H2-type zinc finger occupies 21–47 (YECPVETCRKVYKSYSGIEYHLYHYDH). 2 disordered regions span residues 43–87 (YHYD…SPGR) and 118–176 (VVSE…PKLP). The segment covering 58 to 67 (LRKHKKKGRQ) has biased composition (basic residues). Residues 59–221 (RKHKKKGRQS…VEYDMDEEDY (163 aa)) are interaction with KAT6A and KAT6B. Residues 74–85 (QSPSPSEVSQSP) are compositionally biased toward low complexity. Over residues 119-130 (VSEDEEAPEEAP) the composition is skewed to acidic residues. Serine 120 carries the post-translational modification Phosphoserine. N6-acetyllysine is present on lysine 147. Basic residues predominate over residues 148-166 (SGKHKNKEKRKDSNHHHHS). Position 237 is a phosphoserine (serine 237). The segment at 272 to 322 (DAVCCICNDGECQNSNVILFCDMCNLAVHQECYGVPYIPEGQWLCRRCLQS) adopts a PHD-type 1 zinc-finger fold. The C2HC pre-PHD-type zinc finger occupies 326-359 (AVDCALCPNKGGAFKQTDDGRWAHVVCALWIPEV). A PHD-type 2 zinc finger spans residues 383–447 (LTCYICKQRG…RKTAYCDIHT (65 aa)). Residues 447-489 (TPPGSARRLPALSHSEGEEEEDEEEDEGKSWSSEKVKKAKAKS) form a disordered region. Phosphoserine is present on residues serine 459 and serine 461. The segment covering 463-473 (GEEEEDEEEDE) has biased composition (acidic residues). The tract at residues 500–819 (LAEKRAAAPV…IKKEMTALRR (320 aa)) is interaction with MEAF6 and ING5. The interval 542 to 1077 (YWTLKRQSRN…RGAGWLSEDE (536 aa)) is required for RUNX1 and RUNX2 transcriptional activation. Lysine 579 carries the post-translational modification N6-acetyllysine. Positions 627 to 731 (MQLTPFLILL…EQGGAVLRQA (105 aa)) constitute a Bromo domain. Positions 817–1060 (LRRKLAHQRE…VGTGRGVGHS (244 aa)) are disordered. Positions 823-836 (HQRETGRDGPERHG) are enriched in basic and acidic residues. Threonine 856 carries the phosphothreonine modification. Positions 856-869 (TDSAAEESSSQETS) are enriched in low complexity. A phosphoserine mark is found at serine 858, serine 915, serine 920, and serine 924. Low complexity predominate over residues 993–1019 (PRSSSDSESSSSSSSSAASDRTSTTPS). At serine 1074 the chain carries Phosphoserine. The PWWP domain occupies 1083 to 1166 (ALDLVWAKCR…RTKLVPLGVN (84 aa)). Residue serine 1185 is modified to Phosphoserine.

As to quaternary structure, component of some HBO1 complex composed of KAT7/HBO1, MEAF6, ING5, and BRPF1. Component of the MOZ/MORF complex composed at least of ING5, KAT6A, KAT6B, MEAF6 and one of BRPF1, BRD1/BRPF2 and BRPF3. Interacts (via PHD-type zinc finger domains) with unmethylated histone H3 at 'Lys-4' (H3K4me0). Interacts with trimethylated 'Lys-36' of histone H3 (H3K36me3). Interacts with ING5; interaction directs BRPF1 to H4K4me3-enriched chromatin at the 5' of active genes. Interacts with KAT7. Acetylated by KAT6A. As to expression, expressed at low level in most tissues, with high expression in the testis and specific regions of the brain.

Its subcellular location is the nucleus. It localises to the chromosome. It is found in the cytoplasm. Scaffold subunit of various histone acetyltransferase (HAT) complexes, such as the MOZ/MORF and HBO1 complexes, which have a histone H3 acetyltransferase activity. Plays a key role in HBO1 complex by directing KAT7/HBO1 specificity towards histone H3 'Lys-14' acetylation (H3K14ac). Some HAT complexes preferentially mediate histone H3 'Lys-23' (H3K23ac) acetylation. Positively regulates the transcription of RUNX1 and RUNX2. This Mus musculus (Mouse) protein is Peregrin.